Here is a 392-residue protein sequence, read N- to C-terminus: Iripin-1 (392 aa).

The signal sequence occupies residues 1–16 (MKPLVPLLFLLVSCRA). 3 N-linked (GlcNAc...) asparagine glycosylation sites follow: Asn104, Asn196, and Asn265.

Belongs to the serpin family. Interacts with human KLKB1. Interacts with human ST14. Interacts with human PLG (plasmin). Highly expressed in salivary gland. Expressed in midgut and ovary.

The protein localises to the secreted. Its function is as follows. Serine protease inhibitor that modulates blood feeding of ticks on vertebrate species. Modestly inhibits human trypsin, plasma kallikrein (KLKB1), matriptase (ST14) and plasmin (PLG) via a classic serpin inhibitory mechanism. Modestly reduces enzymatic activity of human alpha-chymotrypsin, coagulation factor Xa (F10), factor XIIa (F12), cathepsin G (CTSG), tPA/tissue-type plasminogen activator (PLAT) and uPA/urokinase-type plasminogen activator (PLAU). Probably acts as a substrate rather than an inhibitor for the human neutrophil elastase (ELANE) and thus reduces its enzymatic activity in in vitro assays. Decreases expression of adhesion molecules VCAM1 and CD99 on the surface of human cells. Increases the production of chemokines for neutrophils and monocytes, such as KC/CXCL1, MIP-2/CXCL2 and MIP-1/CCL2, and anti-inflammatory cytokine IL10 in mouse inflammation models. Reduces the recruitment of mouse neutrophils and monocytes to the site of inflammation. Decreases expression of CXCR2 on the surface of mouse neutrophils. Increases expression of integrin ITGAM/ITGB2 on the surface of mouse neutrophils. The chain is Iripin-1 from Ixodes ricinus (Common tick).